We begin with the raw amino-acid sequence, 445 residues long: Putative U-box domain-containing protein 47 (445 aa).

Residues 64 to 137 (EVPKEFICTL…KEWCLIHNFD (74 aa)) enclose the U-box domain.

The enzyme catalyses S-ubiquitinyl-[E2 ubiquitin-conjugating enzyme]-L-cysteine + [acceptor protein]-L-lysine = [E2 ubiquitin-conjugating enzyme]-L-cysteine + N(6)-ubiquitinyl-[acceptor protein]-L-lysine.. The protein operates within protein modification; protein ubiquitination. Functions as an E3 ubiquitin ligase. The polypeptide is Putative U-box domain-containing protein 47 (PUB47) (Arabidopsis thaliana (Mouse-ear cress)).